Consider the following 345-residue polypeptide: Putative F-box protein At3g17265 (345 aa).

The F-box domain maps to 1-46; it reads MMFAYLPPDLESEILSRVPATFLKELQTTCKRWYALFRDPIFVKKN.

This Arabidopsis thaliana (Mouse-ear cress) protein is Putative F-box protein At3g17265.